The primary structure comprises 282 residues: Bifunctional protein FolD (282 aa).

NADP(+) contacts are provided by residues 165-167, Thr-192, and Val-233; that span reads GRG.

This sequence belongs to the tetrahydrofolate dehydrogenase/cyclohydrolase family. Homodimer.

The catalysed reaction is (6R)-5,10-methylene-5,6,7,8-tetrahydrofolate + NADP(+) = (6R)-5,10-methenyltetrahydrofolate + NADPH. It carries out the reaction (6R)-5,10-methenyltetrahydrofolate + H2O = (6R)-10-formyltetrahydrofolate + H(+). Its pathway is one-carbon metabolism; tetrahydrofolate interconversion. In terms of biological role, catalyzes the oxidation of 5,10-methylenetetrahydrofolate to 5,10-methenyltetrahydrofolate and then the hydrolysis of 5,10-methenyltetrahydrofolate to 10-formyltetrahydrofolate. This Mycobacterium leprae (strain Br4923) protein is Bifunctional protein FolD.